Reading from the N-terminus, the 228-residue chain is Putative lipoprotein LprH (228 aa).

A signal peptide spans 1-27 (MACLGRPGCRGWAGASLVLVVVLALAA). Residue cysteine 28 is the site of N-palmitoyl cysteine attachment. Residue cysteine 28 is the site of S-diacylglycerol cysteine attachment. Residues 191-211 (GLAVVPHAVLVLSACGFKPGF) traverse the membrane as a helical segment.

Its subcellular location is the cell membrane. This Mycobacterium bovis (strain ATCC BAA-935 / AF2122/97) protein is Putative lipoprotein LprH (lprH).